The primary structure comprises 94 residues: Probable Fe(2+)-trafficking protein (94 aa).

It belongs to the Fe(2+)-trafficking protein family.

In terms of biological role, could be a mediator in iron transactions between iron acquisition and iron-requiring processes, such as synthesis and/or repair of Fe-S clusters in biosynthetic enzymes. The protein is Probable Fe(2+)-trafficking protein of Alcanivorax borkumensis (strain ATCC 700651 / DSM 11573 / NCIMB 13689 / SK2).